A 280-amino-acid chain; its full sequence is MKLFVLAAVLGVCLADRLDNKYLPPRGNAGAGFGPGFGGAGPKGGGSGFGGAGSGFGGAGSGFGGAGSGFGGGAGGGFGHGGAGSGFGGQAGGYSGAGGAGGYIGGASGQYSGRGGAASADANAQILRLNNEVTAEGFAYDFETSNGIRADAQGVATNGVQSQGSFAYKGDDGQDYSITYTADENGFVSQGAHLPTPPPIPEEILKSLEQNARDEAAGIVDDGTYRGEGAGAGGAGGYSGAGGCSGGAGGAGGFGAGGAGRAGGTATSASEAPTTTIRLM.

A signal peptide spans 1–15 (MKLFVLAAVLGVCLA). The 64-residue stretch at 135–198 (AEGFAYDFET…SQGAHLPTPP (64 aa)) folds into the Chitin-binding type R&amp;R domain. The interval 258–280 (GAGRAGGTATSASEAPTTTIRLM) is disordered.

The chain is Pupal cuticle protein 36a (PCP36a) from Manduca sexta (Tobacco hawkmoth).